Here is a 55-residue protein sequence, read N- to C-terminus: Large ribosomal subunit protein bL33 (55 aa).

It belongs to the bacterial ribosomal protein bL33 family.

In Arthrobacter sp. (strain FB24), this protein is Large ribosomal subunit protein bL33.